We begin with the raw amino-acid sequence, 166 residues long: Large ribosomal subunit protein uL10 (166 aa).

The protein belongs to the universal ribosomal protein uL10 family. In terms of assembly, part of the ribosomal stalk of the 50S ribosomal subunit. The N-terminus interacts with L11 and the large rRNA to form the base of the stalk. The C-terminus forms an elongated spine to which L12 dimers bind in a sequential fashion forming a multimeric L10(L12)X complex.

In terms of biological role, forms part of the ribosomal stalk, playing a central role in the interaction of the ribosome with GTP-bound translation factors. The chain is Large ribosomal subunit protein uL10 from Bacillus pumilus (strain SAFR-032).